Reading from the N-terminus, the 551-residue chain is Chaperonin GroEL (551 aa).

Residues 30 to 33 (TLGP), lysine 51, 87 to 91 (DGTTT), glycine 415, 479 to 481 (NAA), and aspartate 495 each bind ATP. Residues 523 to 551 (DSPKEDKSSDMPSPSAGGMGGMGGMGGMM) form a disordered region. Over residues 539-551 (GGMGGMGGMGGMM) the composition is skewed to gly residues.

This sequence belongs to the chaperonin (HSP60) family. In terms of assembly, forms a cylinder of 14 subunits composed of two heptameric rings stacked back-to-back. Interacts with the co-chaperonin GroES.

Its subcellular location is the cytoplasm. The enzyme catalyses ATP + H2O + a folded polypeptide = ADP + phosphate + an unfolded polypeptide.. In terms of biological role, together with its co-chaperonin GroES, plays an essential role in assisting protein folding. The GroEL-GroES system forms a nano-cage that allows encapsulation of the non-native substrate proteins and provides a physical environment optimized to promote and accelerate protein folding. The protein is Chaperonin GroEL of Buchnera aphidicola subsp. Chaetophorus leucomelas.